Consider the following 644-residue polypeptide: Threonine--tRNA ligase (644 aa).

Residues 1–62 (MSFSVTLPDG…DSDVEIAIIT (62 aa)) form the TGS domain. The interval 240 to 538 (DHRTIGRDLD…LTEIYKGAFP (299 aa)) is catalytic. Positions 334, 385, and 515 each coordinate Zn(2+).

The protein belongs to the class-II aminoacyl-tRNA synthetase family. In terms of assembly, homodimer. Zn(2+) serves as cofactor.

It localises to the cytoplasm. It catalyses the reaction tRNA(Thr) + L-threonine + ATP = L-threonyl-tRNA(Thr) + AMP + diphosphate + H(+). Its function is as follows. Catalyzes the attachment of threonine to tRNA(Thr) in a two-step reaction: L-threonine is first activated by ATP to form Thr-AMP and then transferred to the acceptor end of tRNA(Thr). Also edits incorrectly charged L-seryl-tRNA(Thr). In Lactobacillus acidophilus (strain ATCC 700396 / NCK56 / N2 / NCFM), this protein is Threonine--tRNA ligase.